Here is a 357-residue protein sequence, read N- to C-terminus: DNA primase small subunit PriS (357 aa).

Active-site residues include aspartate 105, aspartate 107, and aspartate 259.

Belongs to the eukaryotic-type primase small subunit family. As to quaternary structure, heterodimer of a small subunit (PriS) and a large subunit (PriL). Requires Mg(2+) as cofactor. Mn(2+) is required as a cofactor.

Its function is as follows. Catalytic subunit of DNA primase, an RNA polymerase that catalyzes the synthesis of short RNA molecules used as primers for DNA polymerase during DNA replication. The small subunit contains the primase catalytic core and has DNA synthesis activity on its own. Binding to the large subunit stabilizes and modulates the activity, increasing the rate of DNA synthesis while decreasing the length of the DNA fragments, and conferring RNA synthesis capability. The DNA polymerase activity may enable DNA primase to also catalyze primer extension after primer synthesis. May also play a role in DNA repair. The polypeptide is DNA primase small subunit PriS (Methanococcus maripaludis (strain C6 / ATCC BAA-1332)).